Consider the following 116-residue polypeptide: Methionine-R-sulfoxide reductase B1 (116 aa).

Residues Met1–Lys106 form the MsrB domain. Residues Cys23, Cys26, Cys71, and Cys74 each coordinate Zn(2+). The active-site Nucleophile is Sec95. Residue Sec95 is a non-standard amino acid, selenocysteine.

This sequence belongs to the MsrB Met sulfoxide reductase family. Zn(2+) is required as a cofactor. Truncated MSRB1/SEPX1 proteins produced by failed UGA/Sec decoding are ubiquitinated by the CRL2(FEM1C) E3 ubiquitin-protein ligase complex.

The protein resides in the cytoplasm. Its subcellular location is the nucleus. It is found in the cytoskeleton. It carries out the reaction L-methionyl-[protein] + [thioredoxin]-disulfide + H2O = L-methionyl-(R)-S-oxide-[protein] + [thioredoxin]-dithiol. The catalysed reaction is [thioredoxin]-disulfide + L-methionine + H2O = L-methionine (R)-S-oxide + [thioredoxin]-dithiol. Its function is as follows. Methionine-sulfoxide reductase that specifically reduces methionine (R)-sulfoxide back to methionine. While in many cases, methionine oxidation is the result of random oxidation following oxidative stress, methionine oxidation is also a post-translational modification that takes place on specific residue. Acts as a regulator of actin assembly by reducing methionine (R)-sulfoxide mediated by MICALs (MICAL1, MICAL2 or MICAL3) on actin, thereby promoting filament repolymerization. Plays a role in innate immunity by reducing oxidized actin, leading to actin repolymerization in macrophages. The chain is Methionine-R-sulfoxide reductase B1 (MSRB1) from Pongo abelii (Sumatran orangutan).